Here is a 188-residue protein sequence, read N- to C-terminus: MTQTSAAPTTTPSFYEILNLPFPSTGLSKQQLKIAYHKALLKHHPDKAVAVAKENLPSSNHGPAQPPSNQKITIDAITTAYKTLSDPVQRAEYDRVLRLDRNRVNGAGDKNGNGTVFHTGLEVVDLEDLDCDEGGDEAMWYMACRCGDERGFSLSESDLEREADSGEIVVGCRGCSLYTKVLFAVQDD.

The region spanning 13 to 97 (SFYEILNLPF…VQRAEYDRVL (85 aa)) is the J domain. The region spanning 120–184 (GLEVVDLEDL…CSLYTKVLFA (65 aa)) is the DPH-type MB domain. Zn(2+) contacts are provided by Cys-144, Cys-146, Cys-172, and Cys-175.

Belongs to the DPH4 family.

The protein localises to the cytoplasm. It is found in the nucleus. Its pathway is protein modification; peptidyl-diphthamide biosynthesis. Its function is as follows. Required for the first step of diphthamide biosynthesis, the transfer of 3-amino-3-carboxypropyl from S-adenosyl-L-methionine to a histidine residue. Diphthamide is a post-translational modification of histidine which occurs in elongation factor 2. In Emericella nidulans (strain FGSC A4 / ATCC 38163 / CBS 112.46 / NRRL 194 / M139) (Aspergillus nidulans), this protein is Diphthamide biosynthesis protein 4 (dph4).